Consider the following 232-residue polypeptide: Large ribosomal subunit protein uL1 (232 aa).

Belongs to the universal ribosomal protein uL1 family. As to quaternary structure, part of the 50S ribosomal subunit.

Binds directly to 23S rRNA. The L1 stalk is quite mobile in the ribosome, and is involved in E site tRNA release. Functionally, protein L1 is also a translational repressor protein, it controls the translation of the L11 operon by binding to its mRNA. The sequence is that of Large ribosomal subunit protein uL1 from Cutibacterium acnes (strain DSM 16379 / KPA171202) (Propionibacterium acnes).